A 742-amino-acid polypeptide reads, in one-letter code: Ferric enterobactin receptor PirA (742 aa).

A signal peptide spans 1–28; that stretch reads MYPQFRRGHLAAAVLFASSSLLGGQALA. The region spanning 57 to 184 is the TBDR plug domain; that stretch reads QELKQAPGVS…AGGVVNIITK (128 aa). Disordered stretches follow at residues 91 to 112 and 409 to 435; these read GVNL…IDIR and SSLK…PKSK. Positions 94–108 are enriched in polar residues; it reads LTGNSSSGQRGNNRQ. The 554-residue stretch at 189–742 folds into the TBDR beta-barrel domain; the sequence is RLRGSMTVFT…AYYVSMTTSF (554 aa). Cys516 and Cys525 are joined by a disulfide. Residues 725-742 carry the TonB C-terminal box motif; sequence ATYNEPGRAYYVSMTTSF.

It belongs to the TonB-dependent receptor family.

It is found in the cell outer membrane. Its function is as follows. Specific receptor for the siderophore ferric enterobactin. Probably involved in the transport of siderophores, including host catecholamines such as L-DOPA. The chain is Ferric enterobactin receptor PirA from Pseudomonas aeruginosa (strain ATCC 15692 / DSM 22644 / CIP 104116 / JCM 14847 / LMG 12228 / 1C / PRS 101 / PAO1).